The sequence spans 112 residues: Urocortin-2 (112 aa).

An N-terminal signal peptide occupies residues 1-22; the sequence is MTRCALLLLMVLMLGRVLVVPV. Positions 23–70 are excised as a propeptide; the sequence is TPIPTFQLRPQNSPQTTPRPAASESPSAAPTWPWAAQSHCSPTRHPGS. Residues 27–66 are disordered; sequence TFQLRPQNSPQTTPRPAASESPSAAPTWPWAAQSHCSPTR. Residues 38–58 show a composition bias toward low complexity; the sequence is TTPRPAASESPSAAPTWPWAA.

The protein belongs to the sauvagine/corticotropin-releasing factor/urotensin I family. In terms of assembly, binds with high affinity to CRF receptors 2-alpha and 2-beta. Post-translationally, glycosylated.

It localises to the secreted. Functionally, suppresses food intake, delays gastric emptying and decreases heat-induced edema. Might represent an endogenous ligand for maintaining homeostasis after stress. In Homo sapiens (Human), this protein is Urocortin-2 (UCN2).